Here is a 327-residue protein sequence, read N- to C-terminus: tRNA pseudouridine synthase B (327 aa).

The Nucleophile role is filled by D69. Substrate-binding residues include Y97, Y201, and L222.

Belongs to the pseudouridine synthase TruB family. Type 1 subfamily.

The enzyme catalyses uridine(55) in tRNA = pseudouridine(55) in tRNA. Responsible for synthesis of pseudouridine from uracil-55 in the psi GC loop of transfer RNAs. The chain is tRNA pseudouridine synthase B from Wigglesworthia glossinidia brevipalpis.